The sequence spans 201 residues: UPF0376 protein F10G2.1 (201 aa).

At 1-3 the chain is on the cytoplasmic side; it reads MKH. The chain crosses the membrane as a helical; Signal-anchor for type II membrane protein span at residues 4–24; sequence FLLLAIIGILFLGSTYGASVA. Over 25–201 the chain is Extracellular; that stretch reads TEKLKASNCT…LLECDFRNIQ (177 aa). N-linked (GlcNAc...) asparagine glycans are attached at residues Asn32 and Asn124.

The protein belongs to the UPF0376 family.

The protein localises to the membrane. The polypeptide is UPF0376 protein F10G2.1 (Caenorhabditis elegans).